The following is a 299-amino-acid chain: Lipoyl synthase 2 (299 aa).

7 residues coordinate [4Fe-4S] cluster: cysteine 45, cysteine 50, cysteine 56, cysteine 71, cysteine 75, cysteine 78, and serine 295. Residues 57 to 284 (YASGTATFLL…KSFCSKLGFK (228 aa)) form the Radical SAM core domain.

This sequence belongs to the radical SAM superfamily. Lipoyl synthase family. [4Fe-4S] cluster serves as cofactor.

The protein resides in the cytoplasm. The enzyme catalyses [[Fe-S] cluster scaffold protein carrying a second [4Fe-4S](2+) cluster] + N(6)-octanoyl-L-lysyl-[protein] + 2 oxidized [2Fe-2S]-[ferredoxin] + 2 S-adenosyl-L-methionine + 4 H(+) = [[Fe-S] cluster scaffold protein] + N(6)-[(R)-dihydrolipoyl]-L-lysyl-[protein] + 4 Fe(3+) + 2 hydrogen sulfide + 2 5'-deoxyadenosine + 2 L-methionine + 2 reduced [2Fe-2S]-[ferredoxin]. Its pathway is protein modification; protein lipoylation via endogenous pathway; protein N(6)-(lipoyl)lysine from octanoyl-[acyl-carrier-protein]: step 2/2. Functionally, catalyzes the radical-mediated insertion of two sulfur atoms into the C-6 and C-8 positions of the octanoyl moiety bound to the lipoyl domains of lipoate-dependent enzymes, thereby converting the octanoylated domains into lipoylated derivatives. The chain is Lipoyl synthase 2 from Prochlorococcus marinus subsp. pastoris (strain CCMP1986 / NIES-2087 / MED4).